The following is a 447-amino-acid chain: MNSIIKGNVLQMTKKVYIRTFGCQMNQADTEIITALLQDEGYVMTGSEERADLVILNTCAVRENAVEKILHTLDHMKGKRRSRPGLLVGVIGCVPQYYREKMFGMADGIDFLAGPDTYRQLPAMIANAGQGIRGADFGFSSDETYCGIEPARSGTISAFIPVMRGCNNRCAFCVVPFTRGKERSRPFRSVLEDVGRLAASGYKEITLLGQNVNSYSDDEAACDFTELLDRVAVAAEGVRIRFTTSHPKDISESLVRVIAARNNICNAIHLPVQSGSTRMLKLMNRGHTREEYFEKIAMIRSAIPGVTVSTDLIAGFCGETLEDHQATLSMMEDVRFDFAYMFYYSVRPGTYAAKHLPDDVPEEEKKRRLEEIIALQGSISGERNAAEVGAVVEVLAESESKRSSEMLMGRTDTNRVVVFDRHGFEAGDLVKVRIRSSTPATLIGTPA.

One can recognise an MTTase N-terminal domain in the interval 14-130 (KKVYIRTFGC…LPAMIANAGQ (117 aa)). [4Fe-4S] cluster is bound by residues Cys23, Cys59, Cys93, Cys166, Cys170, and Cys173. The Radical SAM core domain occupies 152-382 (RSGTISAFIP…IALQGSISGE (231 aa)). Residues 385–447 (AAEVGAVVEV…TPATLIGTPA (63 aa)) enclose the TRAM domain.

The protein belongs to the methylthiotransferase family. MiaB subfamily. Monomer. [4Fe-4S] cluster serves as cofactor.

The protein localises to the cytoplasm. It carries out the reaction N(6)-dimethylallyladenosine(37) in tRNA + (sulfur carrier)-SH + AH2 + 2 S-adenosyl-L-methionine = 2-methylsulfanyl-N(6)-dimethylallyladenosine(37) in tRNA + (sulfur carrier)-H + 5'-deoxyadenosine + L-methionine + A + S-adenosyl-L-homocysteine + 2 H(+). Catalyzes the methylthiolation of N6-(dimethylallyl)adenosine (i(6)A), leading to the formation of 2-methylthio-N6-(dimethylallyl)adenosine (ms(2)i(6)A) at position 37 in tRNAs that read codons beginning with uridine. In Chlorobium phaeobacteroides (strain BS1), this protein is tRNA-2-methylthio-N(6)-dimethylallyladenosine synthase.